The following is a 318-amino-acid chain: E3 ubiquitin-protein ligase NRDP1 (318 aa).

An RING-type; degenerate zinc finger spans residues 18-57 (CPICSGVLEEPVRAPHCEHAFCNACITQWFAQQQICPVDR). The SIAH-type; degenerate zinc finger occupies 78-138 (KLQISCDNAG…MPNHNCIKHL (61 aa)).

It catalyses the reaction S-ubiquitinyl-[E2 ubiquitin-conjugating enzyme]-L-cysteine + [acceptor protein]-L-lysine = [E2 ubiquitin-conjugating enzyme]-L-cysteine + N(6)-ubiquitinyl-[acceptor protein]-L-lysine.. Its pathway is protein modification; protein ubiquitination. Its function is as follows. Acts as E3 ubiquitin-protein ligase and regulates the degradation of target proteins. This chain is E3 ubiquitin-protein ligase NRDP1 (rnf41), found in Danio rerio (Zebrafish).